Consider the following 729-residue polypeptide: DNA topoisomerase 3 (729 aa).

The Toprim domain occupies 3–136 (KSVVIAEKPS…IKRLWISSVT (134 aa)). Glutamate 9 and aspartate 105 together coordinate Mg(2+). Residues 153–594 (YDNLYASAVA…EMKNYTKEIV (442 aa)) enclose the Topo IA-type catalytic domain. An interaction with DNA region spans residues 187-192 (NCGRVQ). The active-site O-(5'-phospho-DNA)-tyrosine intermediate is tyrosine 310. The span at 686–713 (ERRKKESGNKADKRDVQKYMKQQNKEEE) shows a compositional bias: basic and acidic residues. The disordered stretch occupies residues 686-719 (ERRKKESGNKADKRDVQKYMKQQNKEEEPLNNPF).

It belongs to the type IA topoisomerase family. Mg(2+) serves as cofactor.

It catalyses the reaction ATP-independent breakage of single-stranded DNA, followed by passage and rejoining.. Releases the supercoiling and torsional tension of DNA, which is introduced during the DNA replication and transcription, by transiently cleaving and rejoining one strand of the DNA duplex. Introduces a single-strand break via transesterification at a target site in duplex DNA. The scissile phosphodiester is attacked by the catalytic tyrosine of the enzyme, resulting in the formation of a DNA-(5'-phosphotyrosyl)-enzyme intermediate and the expulsion of a 3'-OH DNA strand. The free DNA strand then undergoes passage around the unbroken strand, thus removing DNA supercoils. Finally, in the religation step, the DNA 3'-OH attacks the covalent intermediate to expel the active-site tyrosine and restore the DNA phosphodiester backbone. In Bacillus cereus (strain ATCC 14579 / DSM 31 / CCUG 7414 / JCM 2152 / NBRC 15305 / NCIMB 9373 / NCTC 2599 / NRRL B-3711), this protein is DNA topoisomerase 3.